The chain runs to 172 residues: Dual-action ribosomal maturation protein DarP (172 aa).

This sequence belongs to the DarP family.

It is found in the cytoplasm. In terms of biological role, member of a network of 50S ribosomal subunit biogenesis factors which assembles along the 30S-50S interface, preventing incorrect 23S rRNA structures from forming. Promotes peptidyl transferase center (PTC) maturation. The polypeptide is Dual-action ribosomal maturation protein DarP (Ectopseudomonas mendocina (strain ymp) (Pseudomonas mendocina)).